The following is a 2599-amino-acid chain: Protein DOP1 homolog (2599 aa).

Disordered regions lie at residues 532–571 (EQSG…SDSR) and 595–701 (ASNQ…LDEE). 3 stretches are compositionally biased toward polar residues: residues 534–549 (SGGS…NSAS), 595–604 (ASNQSVGRQS), and 625–636 (ASDTGQQSSSDL). Residue Ser-753 is modified to Phosphoserine. Over residues 1240–1251 (PRIEIPHKETPL) the composition is skewed to basic and acidic residues. 2 disordered regions span residues 1240-1316 (PRIE…SSSA) and 1347-1368 (TYRL…EQKD). Polar residues predominate over residues 1264–1282 (QPSQEQPANQPDNSLQYDQ). The segment covering 1297 to 1309 (SELRETSIEKEDS) has biased composition (basic and acidic residues). A Phosphothreonine modification is found at Thr-1355. Ser-1360, Ser-1363, and Ser-1371 each carry phosphoserine. The tract at residues 1409-1442 (CISKTSTDSNISGSHVEQPEQEEETEPGTESTIN) is disordered. Over residues 1410-1423 (ISKTSTDSNISGSH) the composition is skewed to polar residues. The residue at position 2525 (Ser-2525) is a Phosphoserine.

It belongs to the DOP1 family.

The protein resides in the golgi apparatus membrane. Its function is as follows. May be involved in protein traffic between late Golgi and early endosomes. The sequence is that of Protein DOP1 homolog from Drosophila melanogaster (Fruit fly).